The primary structure comprises 581 residues: Probable CDP-diacylglycerol--glycerol-3-phosphate 3-phosphatidyltransferase (581 aa).

Positions arginine 27–lysine 65 are disordered. Residues serine 44–lysine 65 are compositionally biased toward low complexity. Alanine 160–serine 167 is a binding site for ATP. 2 PLD phosphodiesterase domains span residues threonine 248–tyrosine 274 and aspartate 487–serine 520. Residues histidine 253, lysine 255, and aspartate 260 contribute to the active site.

Belongs to the CDP-alcohol phosphatidyltransferase class-II family.

It carries out the reaction a CDP-1,2-diacyl-sn-glycerol + sn-glycerol 3-phosphate = a 1,2-diacyl-sn-glycero-3-phospho-(1'-sn-glycero-3'-phosphate) + CMP + H(+). Its pathway is phospholipid metabolism; phosphatidylglycerol biosynthesis; phosphatidylglycerol from CDP-diacylglycerol: step 1/2. In terms of biological role, functions in the biosynthesis of the anionic phospholipids phosphatidylglycerol and cardiolipin. This chain is Probable CDP-diacylglycerol--glycerol-3-phosphate 3-phosphatidyltransferase (pgs1), found in Dictyostelium discoideum (Social amoeba).